The sequence spans 980 residues: GPI inositol-deacylase (980 aa).

At 1 to 7 the chain is on the cytoplasmic side; the sequence is MFMFRNC. A helical membrane pass occupies residues 8-28; sequence AVLLVIGSICCFIYGLFRLHV. The Lumenal portion of the chain corresponds to 29 to 628; the sequence is EVEPNACRMT…EYSYSSALSR (600 aa). Serine 170 is an active-site residue. Asparagine 427, asparagine 517, and asparagine 596 each carry an N-linked (GlcNAc...) asparagine glycan. Residues 629–649 form a helical membrane-spanning segment; it reads LVLEFYGWLPAHLVCVLLIVL. The Cytoplasmic segment spans residues 650–709; the sequence is RKQVETFYDVGTFRSLRPYVGYLQYTSLYIVTACRLLKKLIISSRVFPEPEPLDYSINVS. A helical membrane pass occupies residues 710-730; it reads IVIHCAAIALSLLATLGTWLA. The Lumenal segment spans residues 731 to 774; the sequence is LTLYGNAFYRLALRITRLSQATSNVMISIMTHLPITYGILTIAT. Residues 775-795 traverse the membrane as a helical segment; the sequence is AMGTCSGVGLLLAFVFYFLML. Over 796–867 the chain is Cytoplasmic; that stretch reads SNAYKDYLED…CVGLQNFSFH (72 aa). The interval 821 to 853 is disordered; that stretch reads AVTEQEDATEEQNEEQNALKQNDEQKQQQQEEE. Over residues 824–834 the composition is skewed to acidic residues; that stretch reads EQEDATEEQNE. Residues 868-888 form a helical membrane-spanning segment; the sequence is VTLLLMLFVQLLLNAPSSLAW. Over 889–895 the chain is Lumenal; it reads LRSRRHG. Residues 896 to 916 traverse the membrane as a helical segment; sequence INLPDPSLYPSIVVLASLSLL. Over 917–929 the chain is Cytoplasmic; sequence LQLRAPQKCQGYW. The helical transmembrane segment at 930–950 threads the bilayer; that stretch reads MLSIAFYILAGVVLLYCQAAI. The Lumenal segment spans residues 951–954; the sequence is YRLT. Residues 955 to 975 traverse the membrane as a helical segment; it reads YVIAGAFALLSAHQSLWILWG. Over 976 to 980 the chain is Cytoplasmic; it reads RVSRV.

Belongs to the GPI inositol-deacylase family.

Its subcellular location is the endoplasmic reticulum membrane. In terms of biological role, involved in inositol deacylation of GPI-anchored proteins. In Drosophila melanogaster (Fruit fly), this protein is GPI inositol-deacylase.